The chain runs to 382 residues: MKYELDKTSGNARRGRLVFERPQGTFSVETPAFMPVGTYGTVKGMTPEEVRATGAEILLGNTFHLWLRPGQEIMRKHGDLHDFMQWHRPILTDSGGFQVFSLGKLRKITEEGVKFQNPINGERIFLSPEKSMEIQYDLGSDIVMIFDECTPYPATFDYAKKSMEMSLRWAKRSHDRFDELGNKNALFGIIQGGVFEELRKVSLEGLVNIGFDGYAVGGLAVGEPKEDMHRILEYICPQIPADKPRYLMGVGKPEDLVEGVRRGIDMFDCVMPTRNARNGHLFVTDGIVKIRNAKYRDDTSPLDPECDCYTCKNYTKAYLYHLDKCGEILGARLNTIHNLRYYQRLMAEIRQAIEDDRFDDFVVEFYARMGKPVPPLQLADNS.

Aspartate 93 acts as the Proton acceptor in catalysis. Substrate is bound by residues 93-97 (DSGGF), aspartate 147, glutamine 191, and glycine 218. The RNA binding stretch occupies residues 249–255 (GVGKPED). Aspartate 268 serves as the catalytic Nucleophile. The segment at 273 to 277 (TRNAR) is RNA binding; important for wobble base 34 recognition. Zn(2+)-binding residues include cysteine 306, cysteine 308, cysteine 311, and histidine 337.

This sequence belongs to the queuine tRNA-ribosyltransferase family. Homodimer. Within each dimer, one monomer is responsible for RNA recognition and catalysis, while the other monomer binds to the replacement base PreQ1. Requires Zn(2+) as cofactor.

It catalyses the reaction 7-aminomethyl-7-carbaguanine + guanosine(34) in tRNA = 7-aminomethyl-7-carbaguanosine(34) in tRNA + guanine. It participates in tRNA modification; tRNA-queuosine biosynthesis. Functionally, catalyzes the base-exchange of a guanine (G) residue with the queuine precursor 7-aminomethyl-7-deazaguanine (PreQ1) at position 34 (anticodon wobble position) in tRNAs with GU(N) anticodons (tRNA-Asp, -Asn, -His and -Tyr). Catalysis occurs through a double-displacement mechanism. The nucleophile active site attacks the C1' of nucleotide 34 to detach the guanine base from the RNA, forming a covalent enzyme-RNA intermediate. The proton acceptor active site deprotonates the incoming PreQ1, allowing a nucleophilic attack on the C1' of the ribose to form the product. After dissociation, two additional enzymatic reactions on the tRNA convert PreQ1 to queuine (Q), resulting in the hypermodified nucleoside queuosine (7-(((4,5-cis-dihydroxy-2-cyclopenten-1-yl)amino)methyl)-7-deazaguanosine). This chain is Queuine tRNA-ribosyltransferase, found in Haemophilus influenzae (strain 86-028NP).